A 226-amino-acid polypeptide reads, in one-letter code: Type-5 uracil-DNA glycosylase (226 aa).

[4Fe-4S] cluster contacts are provided by Cys-23, Cys-26, Cys-125, and Cys-140.

The protein belongs to the uracil-DNA glycosylase (UDG) superfamily. Type 5 (UDGb) family.

DNA glycosylase with broad substrate specificity. Can remove uracil from double-stranded DNA containing either a U/G or U/A base pair. Can also process hydroxymethyluracil (mispaired with guanine or adenine), hypoxanthine and fluorouracil. Exhibits a clear preference for double-stranded DNA substrates, but can also process uracil in single-stranded DNA, with lower efficiency. The chain is Type-5 uracil-DNA glycosylase from Pyrobaculum aerophilum (strain ATCC 51768 / DSM 7523 / JCM 9630 / CIP 104966 / NBRC 100827 / IM2).